Reading from the N-terminus, the 505-residue chain is Lysine--tRNA ligase (505 aa).

2 residues coordinate Mg(2+): Glu415 and Glu422.

The protein belongs to the class-II aminoacyl-tRNA synthetase family. As to quaternary structure, homodimer. Mg(2+) is required as a cofactor.

The protein resides in the cytoplasm. The enzyme catalyses tRNA(Lys) + L-lysine + ATP = L-lysyl-tRNA(Lys) + AMP + diphosphate. This chain is Lysine--tRNA ligase, found in Yersinia pseudotuberculosis serotype O:1b (strain IP 31758).